Here is a 507-residue protein sequence, read N- to C-terminus: ATP synthase subunit alpha, chloroplastic (507 aa).

ATP is bound at residue 170 to 177; the sequence is GDRQTGKT. A Phosphothreonine modification is found at threonine 257.

It belongs to the ATPase alpha/beta chains family. As to quaternary structure, F-type ATPases have 2 components, CF(1) - the catalytic core - and CF(0) - the membrane proton channel. CF(1) has five subunits: alpha(3), beta(3), gamma(1), delta(1), epsilon(1). CF(0) has four main subunits: a, b, b' and c.

Its subcellular location is the plastid. The protein localises to the chloroplast thylakoid membrane. It catalyses the reaction ATP + H2O + 4 H(+)(in) = ADP + phosphate + 5 H(+)(out). Produces ATP from ADP in the presence of a proton gradient across the membrane. The alpha chain is a regulatory subunit. This chain is ATP synthase subunit alpha, chloroplastic, found in Barbarea verna (Land cress).